We begin with the raw amino-acid sequence, 445 residues long: Baccatin III:3-amino-3-phenylpropanoyltransferase (445 aa).

Belongs to the plant acyltransferase family.

The enzyme catalyses (3R)-3-amino-3-phenylpropanoyl-CoA + baccatin III = 3'-N-debenzoyl-2'-deoxytaxol + CoA. It participates in alkaloid biosynthesis; taxol biosynthesis. Acyltransferase involved in taxol biosynthesis. Catalyzes the selective 13-O-acylation of baccatin III with (3R)-3-amino-3-phenylpropanoyl-CoA as the acyl donor to form 3'-N-debenzoyl-2'-deoxytaxol. The polypeptide is Baccatin III:3-amino-3-phenylpropanoyltransferase (Taxus cuspidata (Japanese yew)).